The sequence spans 66 residues: Large ribosomal subunit protein bL33 (66 aa).

It belongs to the bacterial ribosomal protein bL33 family.

The chain is Large ribosomal subunit protein bL33 from Wolbachia pipientis wMel.